The sequence spans 217 residues: ATP phosphoribosyltransferase (217 aa).

It belongs to the ATP phosphoribosyltransferase family. Short subfamily. Heteromultimer composed of HisG and HisZ subunits.

It is found in the cytoplasm. It carries out the reaction 1-(5-phospho-beta-D-ribosyl)-ATP + diphosphate = 5-phospho-alpha-D-ribose 1-diphosphate + ATP. The protein operates within amino-acid biosynthesis; L-histidine biosynthesis; L-histidine from 5-phospho-alpha-D-ribose 1-diphosphate: step 1/9. Its function is as follows. Catalyzes the condensation of ATP and 5-phosphoribose 1-diphosphate to form N'-(5'-phosphoribosyl)-ATP (PR-ATP). Has a crucial role in the pathway because the rate of histidine biosynthesis seems to be controlled primarily by regulation of HisG enzymatic activity. This chain is ATP phosphoribosyltransferase, found in Prochlorococcus marinus (strain MIT 9313).